Consider the following 92-residue polypeptide: DNA-directed RNA polymerase subunit Rpo11 (92 aa).

It belongs to the archaeal Rpo11/eukaryotic RPB11/RPC19 RNA polymerase subunit family. As to quaternary structure, part of the RNA polymerase complex.

The protein localises to the cytoplasm. It carries out the reaction RNA(n) + a ribonucleoside 5'-triphosphate = RNA(n+1) + diphosphate. DNA-dependent RNA polymerase (RNAP) catalyzes the transcription of DNA into RNA using the four ribonucleoside triphosphates as substrates. This chain is DNA-directed RNA polymerase subunit Rpo11, found in Pyrobaculum aerophilum (strain ATCC 51768 / DSM 7523 / JCM 9630 / CIP 104966 / NBRC 100827 / IM2).